The following is a 490-amino-acid chain: Glutathione reductase (490 aa).

Ser-19 and Gly-20 together coordinate FAD. Ser-19 contributes to the glutathione binding site. Position 26 (Arg-26) interacts with glutathione. FAD-binding residues include Glu-39, Thr-48, Cys-49, and Lys-57. Cysteines 49 and 54 form a disulfide. Residue Tyr-110 coordinates glutathione. Ala-126 contacts FAD. NADP(+)-binding residues include Ala-208, Ile-211, Glu-214, Arg-231, and Arg-237. Ser-246 is a glutathione binding site. Residue Gly-297 coordinates NADP(+). Position 337 (Asp-337) interacts with FAD. Glu-343 lines the NADP(+) pocket. Thr-345 is a binding site for FAD. Arg-353 contacts glutathione. Val-379 lines the NADP(+) pocket. Lys-432 contributes to the glutathione binding site. His-479 contacts FAD. The active-site Proton acceptor is His-479.

The protein belongs to the class-I pyridine nucleotide-disulfide oxidoreductase family. In terms of assembly, homodimer. FAD serves as cofactor.

The protein resides in the cytoplasm. It is found in the mitochondrion. It carries out the reaction 2 glutathione + NADP(+) = glutathione disulfide + NADPH + H(+). Functionally, catalyzes the reduction of glutathione disulfide (GSSG) to reduced glutathione (GSH). Constitutes the major mechanism to maintain a high GSH:GSSG ratio in the cytosol. This Debaryomyces hansenii (strain ATCC 36239 / CBS 767 / BCRC 21394 / JCM 1990 / NBRC 0083 / IGC 2968) (Yeast) protein is Glutathione reductase (GLR1).